The sequence spans 102 residues: Glycoprotein 24A (102 aa).

The protein belongs to the csb family. Post-translationally, O-glycosylated.

Its subcellular location is the cell surface. Cell-cell adhesion during early development. The protein is Glycoprotein 24A (csbA) of Dictyostelium discoideum (Social amoeba).